Consider the following 621-residue polypeptide: Solute carrier family 2, facilitated glucose transporter member 12 (621 aa).

Over 1–48 (MVPVENTEGPNLLNQKGTAVETEGSYRASGSRHPPWARGCGMFTFLSS) the chain is Cytoplasmic. Residues 49–69 (VTAAVSGLLVGYELGIISGAL) form a helical membrane-spanning segment. Residues 70–84 (LQIKTLLTLSCHEQE) are Extracellular-facing. The helical transmembrane segment at 85–105 (MVVSSLLIGALLASLTGGVLI) threads the bilayer. Over 106–119 (DRYGRRTAIILSSC) the chain is Cytoplasmic. A helical transmembrane segment spans residues 120 to 140 (LLGLGSLVLILSLSYTVLIVG). Residue Arg141 is a topological domain, extracellular. The helical transmembrane segment at 142 to 162 (IAIGVSISLSSIATCVYIAEI) threads the bilayer. Topologically, residues 163 to 176 (APQHRRGLLVSLNE) are cytoplasmic. Residues 177 to 197 (LMIVIGILSAYISNYAFANVF) traverse the membrane as a helical segment. Residues 198 to 201 (HGWK) lie on the Extracellular side of the membrane. Residues 202–222 (YMFGLVIPLGILQAIAMYFLP) traverse the membrane as a helical segment. The Cytoplasmic portion of the chain corresponds to 223-282 (PSPRFLVMKGQEGAASKVLGRLRALSDATEELTVIKSSLKDEYQYSFWDLFRSKDNMRTR). A helical membrane pass occupies residues 283 to 303 (IMIGLTLVFFVQITGQPNILF). The Extracellular portion of the chain corresponds to 304-321 (YASTVLKSVGFQSNEAAS). Residues 322 to 342 (LASTGVGVVKVISTIPATLLV) traverse the membrane as a helical segment. Over 343 to 349 (DHVGSKT) the chain is Cytoplasmic. The chain crosses the membrane as a helical span at residues 350–370 (FLCIGSSVMAASLVTMGIVNL). At 371–470 (NIHMNFTNIC…PAFLKWLSLA (100 aa)) the chain is on the extracellular side. N-linked (GlcNAc...) asparagine glycosylation is found at Asn375, Asn387, Asn400, and Asn405. A helical membrane pass occupies residues 471-491 (SLLVYVAAFSIGLGPMPWLVL). The Cytoplasmic portion of the chain corresponds to 492–502 (SEIFPGGIRGR). The chain crosses the membrane as a helical span at residues 503 to 523 (AMALTSSMNWGINLLISLTFL). Residues 524–532 (TVTDLIGLP) are Extracellular-facing. A helical membrane pass occupies residues 533–553 (WVCFIYTIMSLASLLFVVMFI). Residues 554–621 (PETKGCSLEQ…GQSRQLSPEN (68 aa)) lie on the Cytoplasmic side of the membrane.

The protein belongs to the major facilitator superfamily. Sugar transporter (TC 2.A.1.1) family. Glucose transporter subfamily.

Its subcellular location is the cell membrane. The protein resides in the endomembrane system. It localises to the cytoplasm. The protein localises to the perinuclear region. It catalyses the reaction D-glucose(out) = D-glucose(in). Functionally, insulin-independent facilitative glucose transporter. The protein is Solute carrier family 2, facilitated glucose transporter member 12 of Macaca fascicularis (Crab-eating macaque).